The primary structure comprises 377 residues: MYTFVVRDENSSVYAEVSRLLLATGYWKRLRRDNPRFNLMLGERNRLPFGRLGHEPGLAQLVNYYRGADKLCRKASLVKLVKTSPELSESCSWFPESYVIYPTNLKTPVAPAQNGIQLPVSNSRTDEREFFLASYNRKKEDGEGNVWIAKSSAGAKGEGILISSEASELLDFIDSQGQVHVIQKYLERPLLLEPGHRKFDIRSWVLVDHQYNIYLYREGVLRTASEPYHVDNFQDKTCHLTNHCIQKEYSKNYGKYEEGNEMFFEEFNQYLTSALNITLESSILLQIKHIIRSCLMSVEPAISTKHLPYQSFQLLGFDFMVDEELKVWLIEVNGAPACAQKLYAELCQGIVDIAISSVFPPPDTEQVPQQPAAFVKL.

A TTL domain is found at threonine 3–glutamine 370.

This sequence belongs to the tubulin--tyrosine ligase family. As to quaternary structure, monomer. The cofactor is Mg(2+). Requires K(+) as cofactor.

The catalysed reaction is C-terminal L-alpha-aminoacyl-L-glutamyl-L-glutamyl-[tubulin] + L-tyrosine + ATP = C-terminal L-alpha-aminoacyl-L-glutamyl-L-glutamyl-L-tyrosyl-[tubulin] + ADP + phosphate + H(+). In terms of biological role, catalyzes the post-translational addition of a tyrosine to the C-terminal end of detyrosinated alpha-tubulin. The protein is Tubulin--tyrosine ligase (Ttl) of Mus musculus (Mouse).